A 198-amino-acid chain; its full sequence is Nucleoid occlusion factor SlmA (198 aa).

In terms of domain architecture, HTH tetR-type spans 10 to 70 (NRREEILQSL…SLIEFIEDSL (61 aa)). The H-T-H motif DNA-binding region spans 33–52 (TTAKLAASVGVSEAALYRHF). The stretch at 119–144 (DRLQGRINQLFERIEVQLRQVMREKK) forms a coiled coil.

Belongs to the nucleoid occlusion factor SlmA family. As to quaternary structure, homodimer. Interacts with FtsZ.

The protein resides in the cytoplasm. The protein localises to the nucleoid. In terms of biological role, required for nucleoid occlusion (NO) phenomenon, which prevents Z-ring formation and cell division over the nucleoid. Acts as a DNA-associated cell division inhibitor that binds simultaneously chromosomal DNA and FtsZ, and disrupts the assembly of FtsZ polymers. SlmA-DNA-binding sequences (SBS) are dispersed on non-Ter regions of the chromosome, preventing FtsZ polymerization at these regions. This is Nucleoid occlusion factor SlmA from Klebsiella pneumoniae (strain 342).